The sequence spans 198 residues: MIKSKFFCKSLKFFMHPYSKIKNEKSFIDLNFIKGYSNFIKKKCVPYDKKKYIFCNKNRLISNVGNKINKKESEEQYDSDDDNDKLVLNDDEDDEKKQVHINNKTEATNITNINKNIENIKNDMSNLNNMNDSNQKIKMKNKGKYDSDVIIMYDHFFQLPQNFLSSKLSEEEIEYINTGIYNPDFDNYINNIVMKKKK.

Positions 72 to 95 (ESEEQYDSDDDNDKLVLNDDEDDE) are disordered. Positions 75–94 (EQYDSDDDNDKLVLNDDEDD) are enriched in acidic residues. A coiled-coil region spans residues 106 to 136 (EATNITNINKNIENIKNDMSNLNNMNDSNQK).

This is an uncharacterized protein from Plasmodium falciparum (isolate 3D7).